The chain runs to 556 residues: Urocanate hydratase (556 aa).

NAD(+)-binding positions include 52–53 (GG), Q130, 176–178 (GMG), E196, R201, 242–243 (NA), 263–267 (QTSAH), 273–274 (YL), and Y322. Residue C410 is part of the active site. An NAD(+)-binding site is contributed by G492.

It belongs to the urocanase family. The cofactor is NAD(+).

The protein localises to the cytoplasm. The enzyme catalyses 4-imidazolone-5-propanoate = trans-urocanate + H2O. It participates in amino-acid degradation; L-histidine degradation into L-glutamate; N-formimidoyl-L-glutamate from L-histidine: step 2/3. Its function is as follows. Catalyzes the conversion of urocanate to 4-imidazolone-5-propionate. The sequence is that of Urocanate hydratase from Shewanella sediminis (strain HAW-EB3).